Consider the following 238-residue polypeptide: Uridylate kinase (238 aa).

Residue 12-15 (KLSG) participates in ATP binding. A UMP-binding site is contributed by G54. G55 and R59 together coordinate ATP. Residues D74 and 135–142 (TGNPYFTT) each bind UMP. Positions 162, 168, and 171 each coordinate ATP.

Belongs to the UMP kinase family. In terms of assembly, homohexamer.

The protein resides in the cytoplasm. The enzyme catalyses UMP + ATP = UDP + ADP. Its pathway is pyrimidine metabolism; CTP biosynthesis via de novo pathway; UDP from UMP (UMPK route): step 1/1. Inhibited by UTP. In terms of biological role, catalyzes the reversible phosphorylation of UMP to UDP. The protein is Uridylate kinase of Oleidesulfovibrio alaskensis (strain ATCC BAA-1058 / DSM 17464 / G20) (Desulfovibrio alaskensis).